Consider the following 435-residue polypeptide: Adenylosuccinate synthetase (435 aa).

GTP contacts are provided by residues 11 to 17 (GDEGKGK) and 39 to 41 (GHT). Asp12 acts as the Proton acceptor in catalysis. Residues Asp12 and Gly39 each coordinate Mg(2+). IMP is bound by residues 12 to 15 (DEGK), 37 to 40 (NAGH), Thr128, Arg142, Gln223, Thr238, and Arg302. His40 functions as the Proton donor in the catalytic mechanism. Position 298-304 (298-304 (SVTGRPR)) interacts with substrate. GTP-binding positions include Arg304, 330–332 (KLD), and 412–414 (STG).

It belongs to the adenylosuccinate synthetase family. Homodimer. Mg(2+) serves as cofactor.

It localises to the cytoplasm. The enzyme catalyses IMP + L-aspartate + GTP = N(6)-(1,2-dicarboxyethyl)-AMP + GDP + phosphate + 2 H(+). It participates in purine metabolism; AMP biosynthesis via de novo pathway; AMP from IMP: step 1/2. Plays an important role in the de novo pathway of purine nucleotide biosynthesis. Catalyzes the first committed step in the biosynthesis of AMP from IMP. The protein is Adenylosuccinate synthetase of Coxiella burnetii (strain RSA 331 / Henzerling II).